A 154-amino-acid chain; its full sequence is MYRMQLLSCIALSLALVTNSAPTSSSTKKTQLQLEHLLLDLQMILNGINNYKNPKLTRMLTFKFYMPKKATELRHLQCLEEELKPLEEVLNLAQSKSFHLRDTKDLISNINVIVLELKGSETTLMCEYADETATIVEFLNRWITFCQSIISTLT.

The first 20 residues, 1–20, serve as a signal peptide directing secretion; sequence MYRMQLLSCIALSLALVTNS. The O-linked (GalNAc...) threonine glycan is linked to Thr-23. Cys-78 and Cys-126 are disulfide-bonded.

It belongs to the IL-2 family.

The protein resides in the secreted. In terms of biological role, cytokine produced by activated CD4-positive helper T-cells and to a lesser extend activated CD8-positive T-cells and natural killer (NK) cells that plays pivotal roles in the immune response and tolerance. Binds to a receptor complex composed of either the high-affinity trimeric IL-2R (IL2RA/CD25, IL2RB/CD122 and IL2RG/CD132) or the low-affinity dimeric IL-2R (IL2RB and IL2RG). Interaction with the receptor leads to oligomerization and conformation changes in the IL-2R subunits resulting in downstream signaling starting with phosphorylation of JAK1 and JAK3. In turn, JAK1 and JAK3 phosphorylate the receptor to form a docking site leading to the phosphorylation of several substrates including STAT5. This process leads to activation of several pathways including STAT, phosphoinositide-3-kinase/PI3K and mitogen-activated protein kinase/MAPK pathways. Functions as a T-cell growth factor and can increase NK-cell cytolytic activity as well. Promotes strong proliferation of activated B-cells and subsequently immunoglobulin production. Plays a pivotal role in regulating the adaptive immune system by controlling the survival and proliferation of regulatory T-cells, which are required for the maintenance of immune tolerance. Moreover, participates in the differentiation and homeostasis of effector T-cell subsets, including Th1, Th2, Th17 as well as memory CD8-positive T-cells. This Macaca fascicularis (Crab-eating macaque) protein is Interleukin-2 (IL2).